A 506-amino-acid chain; its full sequence is Cysteine--tRNA ligase (506 aa).

Residue Cys-34 coordinates Zn(2+). The 'HIGH' region motif lies at 36 to 46 (PTVYDFAHIGN). Zn(2+)-binding residues include Cys-230, His-269, and Glu-273. Positions 302–306 (KMSKS) match the 'KMSKS' region motif. Position 305 (Lys-305) interacts with ATP.

The protein belongs to the class-I aminoacyl-tRNA synthetase family. In terms of assembly, monomer. The cofactor is Zn(2+).

It localises to the cytoplasm. The catalysed reaction is tRNA(Cys) + L-cysteine + ATP = L-cysteinyl-tRNA(Cys) + AMP + diphosphate. In Brucella suis biovar 1 (strain 1330), this protein is Cysteine--tRNA ligase.